Consider the following 274-residue polypeptide: 3-methyl-2-oxobutanoate hydroxymethyltransferase (274 aa).

Residues D49 and D88 each coordinate Mg(2+). Residues 49–50 (DS), D88, and K118 each bind 3-methyl-2-oxobutanoate. E120 contacts Mg(2+). E187 (proton acceptor) is an active-site residue.

Belongs to the PanB family. As to quaternary structure, homodecamer; pentamer of dimers. Requires Mg(2+) as cofactor.

It is found in the cytoplasm. The enzyme catalyses 3-methyl-2-oxobutanoate + (6R)-5,10-methylene-5,6,7,8-tetrahydrofolate + H2O = 2-dehydropantoate + (6S)-5,6,7,8-tetrahydrofolate. The protein operates within cofactor biosynthesis; (R)-pantothenate biosynthesis; (R)-pantoate from 3-methyl-2-oxobutanoate: step 1/2. In terms of biological role, catalyzes the reversible reaction in which hydroxymethyl group from 5,10-methylenetetrahydrofolate is transferred onto alpha-ketoisovalerate to form ketopantoate. In Rhodopseudomonas palustris (strain TIE-1), this protein is 3-methyl-2-oxobutanoate hydroxymethyltransferase.